A 429-amino-acid chain; its full sequence is Enolase (429 aa).

Gln-167 is a binding site for (2R)-2-phosphoglycerate. Glu-209 (proton donor) is an active-site residue. Positions 246, 289, and 316 each coordinate Mg(2+). Residues Lys-341, Arg-370, Ser-371, and Lys-392 each coordinate (2R)-2-phosphoglycerate. Lys-341 (proton acceptor) is an active-site residue.

This sequence belongs to the enolase family. Component of the RNA degradosome, a multiprotein complex involved in RNA processing and mRNA degradation. Requires Mg(2+) as cofactor.

The protein resides in the cytoplasm. It localises to the secreted. Its subcellular location is the cell surface. The enzyme catalyses (2R)-2-phosphoglycerate = phosphoenolpyruvate + H2O. It participates in carbohydrate degradation; glycolysis; pyruvate from D-glyceraldehyde 3-phosphate: step 4/5. In terms of biological role, catalyzes the reversible conversion of 2-phosphoglycerate (2-PG) into phosphoenolpyruvate (PEP). It is essential for the degradation of carbohydrates via glycolysis. In Cellvibrio japonicus (strain Ueda107) (Pseudomonas fluorescens subsp. cellulosa), this protein is Enolase.